The primary structure comprises 415 residues: F-box protein ETP1 (415 aa).

The 46-residue stretch at 1–46 (MTIPDLCNDLVDEILCRVPARNLKRLRSTSKRWNRLFKDDRRFARE) folds into the F-box domain.

As to quaternary structure, interacts with EIN2 (via C-terminus).

Functionally, negative regulator of EIN2 protein stability. This Arabidopsis thaliana (Mouse-ear cress) protein is F-box protein ETP1.